Here is a 310-residue protein sequence, read N- to C-terminus: Methionyl-tRNA formyltransferase (310 aa).

(6S)-5,6,7,8-tetrahydrofolate is bound at residue 109–112 (SLLP).

It belongs to the Fmt family.

It carries out the reaction L-methionyl-tRNA(fMet) + (6R)-10-formyltetrahydrofolate = N-formyl-L-methionyl-tRNA(fMet) + (6S)-5,6,7,8-tetrahydrofolate + H(+). Attaches a formyl group to the free amino group of methionyl-tRNA(fMet). The formyl group appears to play a dual role in the initiator identity of N-formylmethionyl-tRNA by promoting its recognition by IF2 and preventing the misappropriation of this tRNA by the elongation apparatus. This chain is Methionyl-tRNA formyltransferase, found in Pseudomonas entomophila (strain L48).